Here is a 65-residue protein sequence, read N- to C-terminus: Large ribosomal subunit protein bL33c (65 aa).

It belongs to the bacterial ribosomal protein bL33 family.

The protein resides in the plastid. It is found in the chloroplast. In Porphyra purpurea (Red seaweed), this protein is Large ribosomal subunit protein bL33c (rpl33).